Consider the following 108-residue polypeptide: uncharacterized protein (108 aa).

The next 3 helical transmembrane spans lie at 26 to 46 (GAVY…ALII), 54 to 74 (LMTL…PLIF), and 84 to 104 (INYQ…CIYM).

The protein localises to the cell membrane. This is an uncharacterized protein from Methanocaldococcus jannaschii (strain ATCC 43067 / DSM 2661 / JAL-1 / JCM 10045 / NBRC 100440) (Methanococcus jannaschii).